Here is a 271-residue protein sequence, read N- to C-terminus: Ribose-phosphate pyrophosphokinase 2 (271 aa).

ATP-binding positions include 34-36 and 82-83; these read DGE and RQ. Mg(2+) is bound by residues H115 and D150. K173 is an active-site residue. Residues R175, D199, and 203–207 contribute to the D-ribose 5-phosphate site; that span reads STGGT.

This sequence belongs to the ribose-phosphate pyrophosphokinase family. Class III (archaeal) subfamily. The cofactor is Mg(2+).

The protein resides in the cytoplasm. The enzyme catalyses D-ribose 5-phosphate + ATP = 5-phospho-alpha-D-ribose 1-diphosphate + AMP + H(+). The protein operates within metabolic intermediate biosynthesis; 5-phospho-alpha-D-ribose 1-diphosphate biosynthesis; 5-phospho-alpha-D-ribose 1-diphosphate from D-ribose 5-phosphate (route I): step 1/1. Its function is as follows. Involved in the biosynthesis of the central metabolite phospho-alpha-D-ribosyl-1-pyrophosphate (PRPP) via the transfer of pyrophosphoryl group from ATP to 1-hydroxyl of ribose-5-phosphate (Rib-5-P). In Archaeoglobus fulgidus (strain ATCC 49558 / DSM 4304 / JCM 9628 / NBRC 100126 / VC-16), this protein is Ribose-phosphate pyrophosphokinase 2.